Here is a 286-residue protein sequence, read N- to C-terminus: Elongation factor Ts (286 aa).

Residues 79 to 82 (TDFV) form an involved in Mg(2+) ion dislocation from EF-Tu region.

The protein belongs to the EF-Ts family.

The protein localises to the cytoplasm. Its function is as follows. Associates with the EF-Tu.GDP complex and induces the exchange of GDP to GTP. It remains bound to the aminoacyl-tRNA.EF-Tu.GTP complex up to the GTP hydrolysis stage on the ribosome. The chain is Elongation factor Ts from Wolbachia pipientis wMel.